The chain runs to 162 residues: uncharacterized protein (162 aa).

The C2H2-type zinc-finger motif lies at 29–50 (CPFCDYTNADAKVVRKHVKSKH). The tract at residues 60–93 (KLESQKSKNNGKKQTGQKKQGKGKKQPKRVRETC) is disordered. Over residues 68–87 (NNGKKQTGQKKQGKGKKQPK) the composition is skewed to basic residues.

To M.jannaschii MJECS06.

This is an uncharacterized protein from Methanocaldococcus jannaschii (strain ATCC 43067 / DSM 2661 / JAL-1 / JCM 10045 / NBRC 100440) (Methanococcus jannaschii).